We begin with the raw amino-acid sequence, 319 residues long: MLDKHGRKINYLRVSVTDRCNLRCVYCMPPEGIVKKEHDNIMRYEEIFKVVKSASLLGVNKIRFTGGEPLILKDIDKLIYNTSKINSIKDIAMTTNAILLEDMVEELKKAGLKRVNISLDSLKEDRFKSITRGGDINKVFKSIEKSLSIGMKPIKINTVIMKGINDDEIDDFMNLTKKYPISVRFIELMPIGEGRKLYKDGYISSEEIISKHSDLIPVETDKSSTALLYKFKESKENIGFISPMSCKFCSGCNRVRLTSEGTLKPCLHSEKEVDLKNYVDSSQALLSKINETIYNKPLEHHMIEEKESKSKKMMYQIGG.

The region spanning 4–227 (KHGRKINYLR…VETDKSSTAL (224 aa)) is the Radical SAM core domain. Arginine 13 lines the GTP pocket. [4Fe-4S] cluster-binding residues include cysteine 20 and cysteine 24. S-adenosyl-L-methionine is bound at residue tyrosine 26. A [4Fe-4S] cluster-binding site is contributed by cysteine 27. Arginine 63 serves as a coordination point for GTP. An S-adenosyl-L-methionine-binding site is contributed by glycine 67. Threonine 94 is a binding site for GTP. Residue serine 118 participates in S-adenosyl-L-methionine binding. Lysine 155 provides a ligand contact to GTP. Methionine 189 is an S-adenosyl-L-methionine binding site. Residues cysteine 249 and cysteine 252 each coordinate [4Fe-4S] cluster. 254–256 (RVR) contributes to the GTP binding site. Cysteine 266 contacts [4Fe-4S] cluster.

Belongs to the radical SAM superfamily. MoaA family. In terms of assembly, monomer and homodimer. It depends on [4Fe-4S] cluster as a cofactor.

The catalysed reaction is GTP + AH2 + S-adenosyl-L-methionine = (8S)-3',8-cyclo-7,8-dihydroguanosine 5'-triphosphate + 5'-deoxyadenosine + L-methionine + A + H(+). The protein operates within cofactor biosynthesis; molybdopterin biosynthesis. Its function is as follows. Catalyzes the cyclization of GTP to (8S)-3',8-cyclo-7,8-dihydroguanosine 5'-triphosphate. This Clostridium botulinum (strain Langeland / NCTC 10281 / Type F) protein is GTP 3',8-cyclase.